We begin with the raw amino-acid sequence, 330 residues long: Atypical chemokine receptor 1 (330 aa).

At 1–57 (MGNCLYPVADDNSTKLAIKEDFLIDFPEDYYPDYNETDVEAAAPCHSCSLLNYSSLP) the chain is on the extracellular side. Residues N12, N35, and N52 are each glycosylated (N-linked (GlcNAc...) asparagine). Disulfide bonds link C45/C270 and C123/C189. Residues 58–78 (FFILVSILGILASGTILYALL) form a helical membrane-spanning segment. The Cytoplasmic portion of the chain corresponds to 79 to 89 (RPLFRWQLYQD). The helical transmembrane segment at 90–110 (RSTLVQLAVGSALFSIVVPIL) threads the bilayer. Over 111-123 (ARGLSGALITSLC) the chain is Extracellular. A helical transmembrane segment spans residues 124–147 (HLAHLVAYGSAFAQALLIGYHACL). The Cytoplasmic segment spans residues 148–160 (GPQLGAGQVPGLR). A helical transmembrane segment spans residues 161–181 (LGVTVGLWGVAALLSLPVVLG). Topologically, residues 182 to 201 (SDTSQGLCTVTFSGEWETLR) are extracellular. A helical transmembrane segment spans residues 202–222 (YIHAAACFAIFVLLPLGLLGT). Residues 223–238 (KGLKTVLGRAPCPWVD) lie on the Cytoplasmic side of the membrane. A helical membrane pass occupies residues 239–259 (VLWVWFIFWWPQGMTLGLDSL). Topologically, residues 260–281 (VRSKAIVVSTCPAQQALDMLLD) are extracellular. Residues 282 to 302 (VAEALAILHCVATPLLLAWVC) form a helical membrane-spanning segment. Residues 303–330 (YQATHTSPPSLPLPTTQTSHLDTLGGKS) lie on the Cytoplasmic side of the membrane.

Belongs to the G-protein coupled receptor 1 family. Atypical chemokine receptor subfamily.

Its subcellular location is the early endosome. It localises to the recycling endosome. The protein localises to the membrane. In terms of biological role, atypical chemokine receptor that controls chemokine levels and localization via high-affinity chemokine binding that is uncoupled from classic ligand-driven signal transduction cascades, resulting instead in chemokine sequestration, degradation, or transcytosis. Also known as interceptor (internalizing receptor) or chemokine-scavenging receptor or chemokine decoy receptor. Has a promiscuous chemokine-binding profile, interacting with inflammatory chemokines of both the CXC and the CC subfamilies but not with homeostatic chemokines. Acts as a receptor for chemokines including CCL2, CCL5, CCL7, CCL11, CCL13, CCL14, CCL17, CXCL5, CXCL6, IL8/CXCL8, CXCL11, GRO, RANTES, MCP-1 and TARC. May regulate chemokine bioavailability and, consequently, leukocyte recruitment through two distinct mechanisms: when expressed in endothelial cells, it sustains the abluminal to luminal transcytosis of tissue-derived chemokines and their subsequent presentation to circulating leukocytes; when expressed in erythrocytes, serves as blood reservoir of cognate chemokines but also as a chemokine sink, buffering potential surges in plasma chemokine levels. The sequence is that of Atypical chemokine receptor 1 (ACKR1) from Bos taurus (Bovine).